A 162-amino-acid polypeptide reads, in one-letter code: Cytochrome c-type biogenesis protein CcmE (162 aa).

The Cytoplasmic portion of the chain corresponds to 1–13 (MSFWPQSRKARRR). A helical; Signal-anchor for type II membrane protein transmembrane segment spans residues 14-34 (LTILLAIAPVLALAVGLALYG). Residues 35 to 162 (LRDSISLFYT…DAPAYGSQKP (128 aa)) lie on the Periplasmic side of the membrane. Heme-binding residues include H128 and Y132. Over residues 140-151 (ALKEQGEWRGEG) the composition is skewed to basic and acidic residues. The disordered stretch occupies residues 140–162 (ALKEQGEWRGEGADAPAYGSQKP).

The protein belongs to the CcmE/CycJ family.

The protein localises to the cell inner membrane. Heme chaperone required for the biogenesis of c-type cytochromes. Transiently binds heme delivered by CcmC and transfers the heme to apo-cytochromes in a process facilitated by CcmF and CcmH. The polypeptide is Cytochrome c-type biogenesis protein CcmE (Caulobacter vibrioides (strain ATCC 19089 / CIP 103742 / CB 15) (Caulobacter crescentus)).